Consider the following 166-residue polypeptide: MSDLRRKGWWNVPDYFHSPLVFDMEEDKEDYIFGPHDEYLHTLEVHSNTLIQLERWFTPTGQTRVTVVGPLKARLWVMDMIRKVGSKNNLDQIKGKMMLLQIRDHPLRDRDLELHPESGSSLWITTMNDTTFVEVPHFSRFPLTVAWLFCGFVRILGIHNFADLHW.

Positions 19 to 78 (PLVFDMEEDKEDYIFGPHDEYLHTLEVHSNTLIQLERWFTPTGQTRVTVVGPLKARLWVM) constitute a KH; atypical domain.

This sequence belongs to the KHDC1 family.

This chain is KH homology domain-containing protein 1C (Khdc1c), found in Mus musculus (Mouse).